Here is an 88-residue protein sequence, read N- to C-terminus: Small ribosomal subunit protein uS15 (88 aa).

The protein belongs to the universal ribosomal protein uS15 family. In terms of assembly, part of the 30S ribosomal subunit. Forms a bridge to the 50S subunit in the 70S ribosome, contacting the 23S rRNA.

Functionally, one of the primary rRNA binding proteins, it binds directly to 16S rRNA where it helps nucleate assembly of the platform of the 30S subunit by binding and bridging several RNA helices of the 16S rRNA. Its function is as follows. Forms an intersubunit bridge (bridge B4) with the 23S rRNA of the 50S subunit in the ribosome. In Mesomycoplasma hyopneumoniae (strain 232) (Mycoplasma hyopneumoniae), this protein is Small ribosomal subunit protein uS15.